The following is a 77-amino-acid chain: Acyl carrier protein (77 aa).

Positions 2-77 (STVEERVKKI…DAIDYIVAHT (76 aa)) constitute a Carrier domain. Residue serine 37 is modified to O-(pantetheine 4'-phosphoryl)serine.

Belongs to the acyl carrier protein (ACP) family. In terms of processing, 4'-phosphopantetheine is transferred from CoA to a specific serine of apo-ACP by AcpS. This modification is essential for activity because fatty acids are bound in thioester linkage to the sulfhydryl of the prosthetic group.

Its subcellular location is the cytoplasm. Its pathway is lipid metabolism; fatty acid biosynthesis. Its function is as follows. Carrier of the growing fatty acid chain in fatty acid biosynthesis. The polypeptide is Acyl carrier protein (Marinobacter nauticus (strain ATCC 700491 / DSM 11845 / VT8) (Marinobacter aquaeolei)).